A 513-amino-acid chain; its full sequence is Putative ribose/galactose/methyl galactoside import ATP-binding protein 2 (513 aa).

ABC transporter domains are found at residues 24–260 (LTAE…VGRE) and 270–510 (VPIG…VMEL). 56–63 (GENGAGKS) is a binding site for ATP.

It belongs to the ABC transporter superfamily. Carbohydrate importer 2 (CUT2) (TC 3.A.1.2) family.

Its subcellular location is the cell inner membrane. The catalysed reaction is D-ribose(out) + ATP + H2O = D-ribose(in) + ADP + phosphate + H(+). It catalyses the reaction D-galactose(out) + ATP + H2O = D-galactose(in) + ADP + phosphate + H(+). In terms of biological role, part of an ABC transporter complex involved in carbohydrate import. Could be involved in ribose, galactose and/or methyl galactoside import. Responsible for energy coupling to the transport system. The polypeptide is Putative ribose/galactose/methyl galactoside import ATP-binding protein 2 (Rhizobium meliloti (strain 1021) (Ensifer meliloti)).